The primary structure comprises 407 residues: Probable endo-beta-1,4-glucanase celB (407 aa).

Positions 1–18 are cleaved as a signal peptide; sequence MALTLAATALVLLPLVTA. An N-linked (GlcNAc...) asparagine glycan is attached at Asn136. Glu216 acts as the Nucleophile in catalysis. The Proton donor role is filled by Glu221.

This sequence belongs to the glycosyl hydrolase 7 (cellulase C) family.

Its subcellular location is the secreted. The catalysed reaction is Endohydrolysis of (1-&gt;4)-beta-D-glucosidic linkages in cellulose, lichenin and cereal beta-D-glucans.. Functionally, has endoglucanase activity on substrates containing beta-1,4 glycosidic bonds, like in carboxymethylcellulose (CMC), hydroxyethylcellulose (HEC) and beta-glucan. Involved in the degradation of complex natural cellulosic substrates. In Neosartorya fischeri (strain ATCC 1020 / DSM 3700 / CBS 544.65 / FGSC A1164 / JCM 1740 / NRRL 181 / WB 181) (Aspergillus fischerianus), this protein is Probable endo-beta-1,4-glucanase celB (celB).